A 155-amino-acid polypeptide reads, in one-letter code: Endoribonuclease YbeY (155 aa).

Residues H114, H118, and H124 each coordinate Zn(2+).

The protein belongs to the endoribonuclease YbeY family. It depends on Zn(2+) as a cofactor.

The protein localises to the cytoplasm. In terms of biological role, single strand-specific metallo-endoribonuclease involved in late-stage 70S ribosome quality control and in maturation of the 3' terminus of the 16S rRNA. The sequence is that of Endoribonuclease YbeY from Photorhabdus laumondii subsp. laumondii (strain DSM 15139 / CIP 105565 / TT01) (Photorhabdus luminescens subsp. laumondii).